Consider the following 628-residue polypeptide: Glutamine--fructose-6-phosphate aminotransferase [isomerizing] (628 aa).

The active-site Nucleophile; for GATase activity is the Cys-2. Residues 2-229 (CGIVGYVGHR…QDQAVVLTAD (228 aa)) enclose the Glutamine amidotransferase type-2 domain. Positions 61 to 94 (ETDSNDGDGLGGSTGLGHTRWATHGRPTDRNAHP) are disordered. SIS domains are found at residues 301-440 (SDQE…ARGT) and 473-618 (LAER…VDKP). Catalysis depends on Lys-623, which acts as the For Fru-6P isomerization activity.

In terms of assembly, homodimer.

The protein localises to the cytoplasm. It carries out the reaction D-fructose 6-phosphate + L-glutamine = D-glucosamine 6-phosphate + L-glutamate. In terms of biological role, catalyzes the first step in hexosamine metabolism, converting fructose-6P into glucosamine-6P using glutamine as a nitrogen source. The protein is Glutamine--fructose-6-phosphate aminotransferase [isomerizing] of Mycolicibacterium smegmatis (strain ATCC 700084 / mc(2)155) (Mycobacterium smegmatis).